Consider the following 453-residue polypeptide: Allantoinase (453 aa).

Positions 59, 61, 146, 186, 242, and 315 each coordinate Zn(2+). Position 146 is an N6-carboxylysine (Lys-146).

This sequence belongs to the metallo-dependent hydrolases superfamily. Allantoinase family. Homotetramer. It depends on Zn(2+) as a cofactor. Post-translationally, carboxylation allows a single lysine to coordinate two zinc ions.

It carries out the reaction (S)-allantoin + H2O = allantoate + H(+). It participates in nitrogen metabolism; (S)-allantoin degradation; allantoate from (S)-allantoin: step 1/1. Its function is as follows. Catalyzes the conversion of allantoin (5-ureidohydantoin) to allantoic acid by hydrolytic cleavage of the five-member hydantoin ring. The sequence is that of Allantoinase from Escherichia coli O139:H28 (strain E24377A / ETEC).